The chain runs to 336 residues: HTH-type transcriptional regulator RafR (336 aa).

Residues 2–55 enclose the HTH lacI-type domain; it reads SLKAIATTLGISVTTVSRALGGFSDVAASTRERVEAEARRRGYRPNTQARRLKT. The segment at residues 3 to 22 is a DNA-binding region (H-T-H motif); the sequence is LKAIATTLGISVTTVSRALG.

In terms of assembly, homodimer.

Functionally, repressor that negatively controls the expression of the raffinose (raf) operon by binding to the raf operator (rafO) DNA. Acts by binding to two operator sites, O1 and 02, which flank the -35 raf promoter box. RafR bound to 02 alone results in 45 % repression of transcription, whereas RafR bound to O1 leads to only 6% repression. This chain is HTH-type transcriptional regulator RafR, found in Escherichia coli.